We begin with the raw amino-acid sequence, 101 residues long: Small ribosomal subunit protein uS14 (101 aa).

It belongs to the universal ribosomal protein uS14 family. As to quaternary structure, part of the 30S ribosomal subunit. Contacts proteins S3 and S10.

Functionally, binds 16S rRNA, required for the assembly of 30S particles and may also be responsible for determining the conformation of the 16S rRNA at the A site. The polypeptide is Small ribosomal subunit protein uS14 (Pseudomonas putida (strain ATCC 47054 / DSM 6125 / CFBP 8728 / NCIMB 11950 / KT2440)).